The following is a 237-amino-acid chain: Large ribosomal subunit protein uL1 (237 aa).

Belongs to the universal ribosomal protein uL1 family. As to quaternary structure, part of the 50S ribosomal subunit.

Its function is as follows. Binds directly to 23S rRNA. The L1 stalk is quite mobile in the ribosome, and is involved in E site tRNA release. Protein L1 is also a translational repressor protein, it controls the translation of the L11 operon by binding to its mRNA. The chain is Large ribosomal subunit protein uL1 from Rickettsia typhi (strain ATCC VR-144 / Wilmington).